Reading from the N-terminus, the 226-residue chain is Large ribosomal subunit protein uL4 (226 aa).

The segment at 47–74 is disordered; that stretch reads GTAKAKTRSEVSGGGRKPWPQKHTGRAR.

Belongs to the universal ribosomal protein uL4 family. As to quaternary structure, part of the 50S ribosomal subunit.

Its function is as follows. One of the primary rRNA binding proteins, this protein initially binds near the 5'-end of the 23S rRNA. It is important during the early stages of 50S assembly. It makes multiple contacts with different domains of the 23S rRNA in the assembled 50S subunit and ribosome. In terms of biological role, forms part of the polypeptide exit tunnel. The chain is Large ribosomal subunit protein uL4 from Kosmotoga olearia (strain ATCC BAA-1733 / DSM 21960 / TBF 19.5.1).